Consider the following 845-residue polypeptide: Protein SPA1-RELATED 3 (845 aa).

Positions 1-19 (MEGSSNSNSRGFNTSGVSD) are enriched in polar residues. Disordered regions lie at residues 1–33 (MEGS…LTTR) and 139–158 (CSDS…KEIG). Residues 1 to 297 (MEGSSNSNSR…MSDLLQSEFI (297 aa)) form the Protein kinase domain. A coiled-coil region spans residues 301–329 (RDNLEEREAAIELRDRIEEQESLLEFLLL). 7 WD repeats span residues 532 to 571 (NSSN…NDNR), 581 to 621 (AGRS…LVTE), 624 to 664 (EHKK…SIGT), 666 to 706 (KTKA…IPLC), 710 to 748 (GHSK…SGIN), 757 to 796 (GHTN…PVMS), and 812 to 845 (DASQ…EMMT). Positions 685 to 699 (AFGSADHKVYYYDLR) match the DWD box motif.

In terms of assembly, interacts with COP1 and CO.

It localises to the nucleus. Repressor of photomorphogenesis in the light. Probably part of the COP1/SPA E3 ubiquitin-protein ligase complex. The sequence is that of Protein SPA1-RELATED 3 (SPA3) from Arabidopsis thaliana (Mouse-ear cress).